The chain runs to 214 residues: Acyl-homoserine-lactone synthase (214 aa).

This sequence belongs to the autoinducer synthase family.

The catalysed reaction is a fatty acyl-[ACP] + S-adenosyl-L-methionine = an N-acyl-L-homoserine lactone + S-methyl-5'-thioadenosine + holo-[ACP] + H(+). In terms of biological role, required for the synthesis of autoinducer molecules such as OHHL (N-(3-oxohexanoyl)-L-homoserine lactone), and HHL (N-hexanoyl-L-homoserine lactone). This Yersinia enterocolitica protein is Acyl-homoserine-lactone synthase (yenI).